Consider the following 429-residue polypeptide: Bifunctional protein GlmU (429 aa).

Residues 1-223 (MKISVLILAA…EQDFMGVNDK (223 aa)) form a pyrophosphorylase region. UDP-N-acetyl-alpha-D-glucosamine contacts are provided by residues 8–11 (LAAG), Lys22, Gln74, and 81–82 (GT). Asp102 serves as a coordination point for Mg(2+). UDP-N-acetyl-alpha-D-glucosamine-binding residues include Gly135, Glu149, Asn164, and Asn221. Asn221 contributes to the Mg(2+) binding site. The interval 224-244 (IELCLAQDLMQEAIKKEWMKQ) is linker. The N-acetyltransferase stretch occupies residues 245–429 (GVIFHMPATT…KDYFYTKFKK (185 aa)). UDP-N-acetyl-alpha-D-glucosamine contacts are provided by Arg308 and Lys325. The Proton acceptor role is filled by His336. Tyr339 and Asn350 together coordinate UDP-N-acetyl-alpha-D-glucosamine. Acetyl-CoA-binding positions include 359–360 (NY), Ser378, Ala396, and Arg413.

It in the N-terminal section; belongs to the N-acetylglucosamine-1-phosphate uridyltransferase family. This sequence in the C-terminal section; belongs to the transferase hexapeptide repeat family. In terms of assembly, homotrimer. Mg(2+) is required as a cofactor.

The protein resides in the cytoplasm. The catalysed reaction is alpha-D-glucosamine 1-phosphate + acetyl-CoA = N-acetyl-alpha-D-glucosamine 1-phosphate + CoA + H(+). It catalyses the reaction N-acetyl-alpha-D-glucosamine 1-phosphate + UTP + H(+) = UDP-N-acetyl-alpha-D-glucosamine + diphosphate. It participates in nucleotide-sugar biosynthesis; UDP-N-acetyl-alpha-D-glucosamine biosynthesis; N-acetyl-alpha-D-glucosamine 1-phosphate from alpha-D-glucosamine 6-phosphate (route II): step 2/2. Its pathway is nucleotide-sugar biosynthesis; UDP-N-acetyl-alpha-D-glucosamine biosynthesis; UDP-N-acetyl-alpha-D-glucosamine from N-acetyl-alpha-D-glucosamine 1-phosphate: step 1/1. It functions in the pathway bacterial outer membrane biogenesis; LPS lipid A biosynthesis. Catalyzes the last two sequential reactions in the de novo biosynthetic pathway for UDP-N-acetylglucosamine (UDP-GlcNAc). The C-terminal domain catalyzes the transfer of acetyl group from acetyl coenzyme A to glucosamine-1-phosphate (GlcN-1-P) to produce N-acetylglucosamine-1-phosphate (GlcNAc-1-P), which is converted into UDP-GlcNAc by the transfer of uridine 5-monophosphate (from uridine 5-triphosphate), a reaction catalyzed by the N-terminal domain. The sequence is that of Bifunctional protein GlmU from Campylobacter lari (strain RM2100 / D67 / ATCC BAA-1060).